The chain runs to 140 residues: Large ribosomal subunit protein uL15 (140 aa).

Positions 1–31 (MDTKKFRGSRTCGGGTHKNRRGAGNRGGRGK) are disordered.

The protein belongs to the universal ribosomal protein uL15 family. In terms of assembly, part of the 50S ribosomal subunit.

Binds to the 23S rRNA. This is Large ribosomal subunit protein uL15 from Methanosarcina barkeri (strain Fusaro / DSM 804).